Here is a 297-residue protein sequence, read N- to C-terminus: Homoserine kinase (297 aa).

Residue 79–89 coordinates ATP; sequence PIARGLGSSGA.

It belongs to the GHMP kinase family. Homoserine kinase subfamily.

It is found in the cytoplasm. The catalysed reaction is L-homoserine + ATP = O-phospho-L-homoserine + ADP + H(+). Its pathway is amino-acid biosynthesis; L-threonine biosynthesis; L-threonine from L-aspartate: step 4/5. In terms of biological role, catalyzes the ATP-dependent phosphorylation of L-homoserine to L-homoserine phosphate. This Pyrobaculum neutrophilum (strain DSM 2338 / JCM 9278 / NBRC 100436 / V24Sta) (Thermoproteus neutrophilus) protein is Homoserine kinase.